An 861-amino-acid chain; its full sequence is Alpha-actinin A (861 aa).

The interval 1–239 (MSEEPTPVSG…VMTYVAQYYH (239 aa)) is actin-binding. Calponin-homology (CH) domains follow at residues 22-127 (ITQK…LRFA) and 136-242 (LSAK…HHFS). Spectrin repeat units lie at residues 240-365 (HFSA…ALEK), 366-480 (AEQE…TGVK), 481-601 (SSAE…EERK), and 602-714 (VQLA…EQVV). EF-hand domains lie at 729–764 (EELSEFKACFSHFDKDNDNKLNRLEFSSCLKSIGDE) and 765–800 (LTEEQLNQVISKIDTDGNGTISFEEFIDYMVSSRKG). Residues aspartate 742, aspartate 744, aspartate 746, lysine 748, glutamate 753, aspartate 778, aspartate 780, asparagine 782, threonine 784, and glutamate 789 each coordinate Ca(2+).

Belongs to the alpha-actinin family. Homodimer; antiparallel.

It localises to the cytoplasm. Its subcellular location is the cell cortex. The protein resides in the contractile vacuole. The protein localises to the cytoplasmic vesicle. It is found in the phagosome. Functionally, F-actin cross-linking protein which is thought to anchor actin to a variety of intracellular structures. This is a bundling protein. Increases the actin-stimulated ATPase activity of myosin. Involved in vegetative cell growth, phagocytosis, motility and development, probably through stabilization of the actin network in the cortical cytoskeleton. In Dictyostelium discoideum (Social amoeba), this protein is Alpha-actinin A (abpA).